A 291-amino-acid chain; its full sequence is uncharacterized protein (291 aa).

Solcar repeat units lie at residues 15-93, 104-190, and 201-287; these read PGPV…IKKS, PRTV…IKQS, and LSTV…VMEI. 6 consecutive transmembrane segments (helical) span residues 21-41, 70-90, 108-128, 169-189, 201-221, and 259-280; these read IIAGGVAGAIEISITYPAEFA, STVIVGNSLKAAVRFFAFDSI, LAGLGAGVAESVLVLTPFESI, TVARQAANSGVRFTAYNSIKQ, LSTVTTFLVGSVAGIITVYCT, and FWSGATPRLARLILSGGIVFTV.

It belongs to the mitochondrial carrier (TC 2.A.29) family.

The protein localises to the mitochondrion inner membrane. This is an uncharacterized protein from Schizosaccharomyces pombe (strain 972 / ATCC 24843) (Fission yeast).